The chain runs to 288 residues: Quinate/shikimate dehydrogenase (288 aa).

The substrate site is built by lysine 71 and aspartate 107. Residues 132–135, 155–158, lysine 205, 232–235, and glycine 255 each bind NAD(+); these read AGGA, NRRD, and CVYN.

Belongs to the shikimate dehydrogenase family. Homodimer.

The catalysed reaction is L-quinate + NAD(+) = 3-dehydroquinate + NADH + H(+). The enzyme catalyses L-quinate + NADP(+) = 3-dehydroquinate + NADPH + H(+). It catalyses the reaction shikimate + NADP(+) = 3-dehydroshikimate + NADPH + H(+). It carries out the reaction shikimate + NAD(+) = 3-dehydroshikimate + NADH + H(+). It functions in the pathway metabolic intermediate biosynthesis; chorismate biosynthesis; chorismate from D-erythrose 4-phosphate and phosphoenolpyruvate: step 4/7. In terms of biological role, the actual biological function of YdiB remains unclear, nor is it known whether 3-dehydroshikimate or quinate represents the natural substrate. Catalyzes the reversible NAD-dependent reduction of both 3-dehydroshikimate (DHSA) and 3-dehydroquinate to yield shikimate (SA) and quinate, respectively. It can use both NAD or NADP for catalysis, however it has higher catalytic efficiency with NAD. This Escherichia coli O17:K52:H18 (strain UMN026 / ExPEC) protein is Quinate/shikimate dehydrogenase.